The chain runs to 317 residues: 2-oxoglutarate and iron-dependent oxygenase domain-containing protein 3 (317 aa).

The segment at 1 to 34 (MATRHRRRGGSAPSWAKPGKPGERPGGPKKSRGR) is disordered. At 1 to 39 (MATRHRRRGGSAPSWAKPGKPGERPGGPKKSRGRTSWKS) the chain is on the cytoplasmic side. Residues 40–60 (LLIWGVFGVTLGLMAGYYLWG) traverse the membrane as a helical; Signal-anchor for type II membrane protein segment. At 61-317 (ELITDDSVTE…EHAIGDPTWT (257 aa)) the chain is on the lumenal side. Asn195 and Asn213 each carry an N-linked (GlcNAc...) asparagine glycan. The 103-residue stretch at 205 to 307 (KPTFFSRMNS…AITISFTCNP (103 aa)) folds into the Fe2OG dioxygenase domain. Positions 228 and 230 each coordinate Fe cation. Asn265 carries N-linked (GlcNAc...) asparagine glycosylation. Fe cation is bound at residue His286. Residue Arg296 is part of the active site. Arg296 provides a ligand contact to 2-oxoglutarate.

Belongs to the OGFOD3 family. Requires Fe(2+) as cofactor. L-ascorbate serves as cofactor.

The protein localises to the membrane. This chain is 2-oxoglutarate and iron-dependent oxygenase domain-containing protein 3 (ogfod3), found in Xenopus tropicalis (Western clawed frog).